Reading from the N-terminus, the 135-residue chain is Large ribosomal subunit protein uL16c (135 aa).

Belongs to the universal ribosomal protein uL16 family. Part of the 50S ribosomal subunit.

It is found in the plastid. It localises to the chloroplast. The sequence is that of Large ribosomal subunit protein uL16c from Euglena gracilis.